A 413-amino-acid chain; its full sequence is MARKKHRKLFPTLASETNKTLDCSNGVCDPICPYNCYPEPDYYTISPQLPPWSSSPQPSPCPSPSISAVYLPSQDSSSSLDAISIITITGAVLAILLTGFFLVAKFFSDSVNRVNQGTYQSDNEDNDTVMEEEFQDREQVDHPIWLIRTTGLQQSIINSITICNYKRGDGLIERTDCPVCLNEFEEDESLRLLPKCNHAFHISCIDTWLSSHTNCPLCRAGIAMISVTTPRYSGPVEVTPGGSGSHLENDGVDEEDHGEIENRVDSDFKESDDSDIRIEIYRFDSDGDGSETETKERVRVLKECMDPNGGDSVNSLSHTKTHVESVDFPGKSCENQSEEFTRHNGEDEASCSEENGGGSNQLRRSCDSGELNGETTGDEGKSQSDISSSTLKTNGSSSSVSCFNKNKSSVFPL.

The helical transmembrane segment at 83-103 (ISIITITGAVLAILLTGFFLV) threads the bilayer. Residues 177–219 (CPVCLNEFEEDESLRLLPKCNHAFHISCIDTWLSSHTNCPLCR) form an RING-type; atypical zinc finger. 2 disordered regions span residues 238–258 (VTPG…EDHG) and 321–413 (THVE…VFPL). Residues 387 to 401 (SSSTLKTNGSSSSVS) are compositionally biased toward low complexity. The span at 402–413 (CFNKNKSSVFPL) shows a compositional bias: polar residues.

The protein belongs to the RING-type zinc finger family. ATL subfamily.

Its subcellular location is the membrane. The catalysed reaction is S-ubiquitinyl-[E2 ubiquitin-conjugating enzyme]-L-cysteine + [acceptor protein]-L-lysine = [E2 ubiquitin-conjugating enzyme]-L-cysteine + N(6)-ubiquitinyl-[acceptor protein]-L-lysine.. It functions in the pathway protein modification; protein ubiquitination. The sequence is that of RING-H2 finger protein ATL54 (ATL54) from Arabidopsis thaliana (Mouse-ear cress).